We begin with the raw amino-acid sequence, 171 residues long: Adenine phosphoribosyltransferase (171 aa).

It belongs to the purine/pyrimidine phosphoribosyltransferase family. Homodimer.

The protein resides in the cytoplasm. The catalysed reaction is AMP + diphosphate = 5-phospho-alpha-D-ribose 1-diphosphate + adenine. The protein operates within purine metabolism; AMP biosynthesis via salvage pathway; AMP from adenine: step 1/1. Its function is as follows. Catalyzes a salvage reaction resulting in the formation of AMP, that is energically less costly than de novo synthesis. In Geobacter metallireducens (strain ATCC 53774 / DSM 7210 / GS-15), this protein is Adenine phosphoribosyltransferase.